We begin with the raw amino-acid sequence, 22 residues long: Myofibril-bound serine protease (22 aa).

The Peptidase S1 domain occupies 1 to 22 (IVGGYECEAYSKPYQVSINLGY).

The protein belongs to the peptidase S1 family. In terms of tissue distribution, detected in skeletal muscle (at protein level).

It is found in the cytoplasm. Its function is as follows. Serine protease which degrades the myosin heavy chain and tropomyosin, but not actin. Selectively cleaves Arg-|-Xaa bonds. This Saurida undosquamis (Brushtooth lizardfish) protein is Myofibril-bound serine protease.